The sequence spans 310 residues: AMMECR1-like protein (310 aa).

Residues 26 to 92 are disordered; sequence LSGSGTHSHG…SGALSPLPRP (67 aa). 2 stretches are compositionally biased toward polar residues: residues 28–66 and 74–84; these read GSGTHSHGNQSTTVPGSSSGPLQNHQHVDNSSGRENVSD and SPITRMNTASG. S74 carries the post-translational modification Phosphoserine. An AMMECR1 domain is found at 97 to 291; it reads NSTKNLVVTA…ISYAEYIASR (195 aa).

This Mus musculus (Mouse) protein is AMMECR1-like protein (Ammecr1l).